Consider the following 266-residue polypeptide: MANKIEVKDLLEAGVHFGHMTRKWDPNMAPYIYMERNGIHIINLYKTAAKIEEANEALKKIAASGRKILFVATKKQAKDIVAEKAAAANMPYITERWPGGMLTNFVTIRKAVKKMSTIDRMKKDGTFMTLSKKERLQVDRLRAKLEKNLGSISDMSRLPAALFVVDIKAEHIAIKEAQKLNIPVFAMVDTNSDPRLVEYVIPANDDASKSIDKILTLVTEAIIDGLANRTSDKEADTTTEEVAQEEVTDTKADEKAIVAEAAKTKE.

Residues 229–254 are disordered; sequence RTSDKEADTTTEEVAQEEVTDTKADE. Residues 237 to 247 are compositionally biased toward acidic residues; the sequence is TTTEEVAQEEV.

This sequence belongs to the universal ribosomal protein uS2 family.

This chain is Small ribosomal subunit protein uS2, found in Flavobacterium psychrophilum (strain ATCC 49511 / DSM 21280 / CIP 103535 / JIP02/86).